Here is a 530-residue protein sequence, read N- to C-terminus: B3 domain-containing protein REM-like 3 (530 aa).

2 consecutive DNA-binding regions (TF-B3) follow at residues K11 to S103 and D144 to E241. Positions S251 to K276 are disordered. The segment covering V254 to K276 has biased composition (basic and acidic residues). 2 consecutive DNA-binding regions (TF-B3) follow at residues N296–E393 and S431–K530.

It localises to the nucleus. In Arabidopsis thaliana (Mouse-ear cress), this protein is B3 domain-containing protein REM-like 3.